Consider the following 529-residue polypeptide: E3 ubiquitin-protein ligase arih1 (529 aa).

Disordered regions lie at residues 1-30 (MDSD…EDDL) and 49-68 (GICG…GEEE). The segment covering 51–64 (CGEGGGSALGPGPG) has biased composition (gly residues). The interval 77–125 (TAEQILQHMVECIREVNEVIQNPATITRILLSHFNWDKEKLMERYFDGN) is UBA-like. The TRIAD supradomain stretch occupies residues 154-365 (QDMPCQICYL…SAWYNCNRYN (212 aa)). Zn(2+) is bound by residues Cys158, Cys161, Cys175, His177, Cys180, Cys183, Cys203, Cys208, Cys248, Cys253, Cys269, Cys271, Cys276, Cys279, His284, Cys289, Cys316, and Cys319. An RING-type 1 zinc finger spans residues 158–208 (CQICYLNYPNSYFTGLECGHKFCMQCWSEYLTTKIIEEGMGQTISCPAHGC). An IBR-type zinc finger spans residues 228–289 (LKYQHLITNS…GENWHDPVKC (62 aa)). The segment at 316–347 (CPKCHVTIEKDGGCNHMVCRNQNCKAEFCWVC) adopts an RING-type 2; atypical zinc-finger fold. Cys329 is an active-site residue. Residues Cys334, Cys339, Cys344, Cys347, His354, and Cys361 each coordinate Zn(2+). Positions 380-529 (RAALQRYLFY…EKDLWEYIED (150 aa)) are ariadne domain.

Belongs to the RBR family. Ariadne subfamily. As to quaternary structure, interacts (via the first RING-type zinc finger) with ube2l3. Associates with cullin-RING ubiquitin ligase (CRL) complexes containing neddylated cullin.

It localises to the cytoplasm. The protein resides in the nucleus. It carries out the reaction [E2 ubiquitin-conjugating enzyme]-S-ubiquitinyl-L-cysteine + [acceptor protein]-L-lysine = [E2 ubiquitin-conjugating enzyme]-L-cysteine + [acceptor protein]-N(6)-ubiquitinyl-L-lysine.. The protein operates within protein modification; protein ubiquitination. With respect to regulation, autoinhibited by the ariadne domain, which masks the second RING-type zinc finger that contains the active site and inhibits the E3 activity. Inhibition is relieved upon binding to neddylated cullin-RING ubiquitin ligase complexes, which activate the E3 ligase activity of ARIH1. Its function is as follows. E3 ubiquitin-protein ligase, which catalyzes ubiquitination of target proteins together with ubiquitin-conjugating enzyme E2 ube2l3. Acts as an atypical E3 ubiquitin-protein ligase by working together with cullin-RING ubiquitin ligase (CRL) complexes and initiating ubiquitination of CRL substrates: associates with CRL complexes and specifically mediates addition of the first ubiquitin on CRLs targets. The initial ubiquitin is then elongated. E3 ubiquitin-protein ligase activity is activated upon binding to neddylated cullin-RING ubiquitin ligase complexes. The protein is E3 ubiquitin-protein ligase arih1 (arih1) of Xenopus tropicalis (Western clawed frog).